A 276-amino-acid polypeptide reads, in one-letter code: uncharacterized protein (276 aa).

The N-terminal stretch at 1–25 (MNKKRLLPKASLGALFMLFGTALTA) is a signal peptide. Residue Cys26 is the site of N-palmitoyl cysteine attachment. Cys26 carries S-diacylglycerol cysteine lipidation.

This sequence belongs to the MG439/MG440 family.

The protein resides in the cell membrane. This is an uncharacterized protein from Mycoplasma pneumoniae (strain ATCC 29342 / M129 / Subtype 1) (Mycoplasmoides pneumoniae).